Here is a 152-residue protein sequence, read N- to C-terminus: Transcriptional regulator MraZ (152 aa).

2 consecutive SpoVT-AbrB domains span residues 5 to 52 (ASAI…PLDE) and 81 to 124 (AHEC…DEAA).

The protein belongs to the MraZ family. As to quaternary structure, forms oligomers.

Its subcellular location is the cytoplasm. It is found in the nucleoid. The chain is Transcriptional regulator MraZ from Shewanella violacea (strain JCM 10179 / CIP 106290 / LMG 19151 / DSS12).